Here is a 337-residue protein sequence, read N- to C-terminus: MTETLRVAVIGAGRMGADHIQRLHQRIHGAEVAAVVDVDLARAQAAIEGIPGAVALADAEEALNNGDVNAVLIATPGFLHEDILLKAIAKDIPILCEKPLTPDAESSLKIVEAEVALGRKRIQVGFMRRFDAEYAALGSIIRNQELGELLMLHHQHRNPTTPAGFTNEMLINDSVVHEFDAIRFFTGEEITSVQVRLGKVTKNAPAGQHDPQHVLIETESGVLADVEIYVNAKFGYEVATQASFEDGIVSIGGDKGPYTRSAGRWGGNVTPGFEERFGAAYDVEIQSWVDAALRGEIGGPSAWDGYATAACCEAGVEAQKNGEKVAVKLAAKPDLYS.

The protein belongs to the Gfo/Idh/MocA family. As to quaternary structure, homotetramer.

It carries out the reaction myo-inositol + NAD(+) = scyllo-inosose + NADH + H(+). Its function is as follows. Involved in the oxidation of myo-inositol (MI) to 2-keto-myo-inositol (2KMI or 2-inosose). This Pseudarthrobacter chlorophenolicus (strain ATCC 700700 / DSM 12829 / CIP 107037 / JCM 12360 / KCTC 9906 / NCIMB 13794 / A6) (Arthrobacter chlorophenolicus) protein is Inositol 2-dehydrogenase.